The sequence spans 488 residues: Inosine-5'-monophosphate dehydrogenase (488 aa).

CBS domains follow at residues 95 to 153 and 157 to 216; these read VISN…SIKI and MTQE…AKDE. NAD(+)-binding positions include aspartate 250 and 300–302; that span reads GIG. K(+) is bound by residues glycine 302 and glycine 304. Serine 305 contacts IMP. Position 307 (cysteine 307) interacts with K(+). Cysteine 307 functions as the Thioimidate intermediate in the catalytic mechanism. Residues 340-342, 363-364, and 387-391 each bind IMP; these read DGG, GS, and YRGMG. Catalysis depends on arginine 403, which acts as the Proton acceptor. Glutamate 417 is an IMP binding site. The disordered stretch occupies residues 468–488; sequence GLAESHPHNIQITKESPNYSF. K(+)-binding residues include glutamate 471, serine 472, and histidine 473. Residues 475–488 are compositionally biased toward polar residues; the sequence is HNIQITKESPNYSF.

It belongs to the IMPDH/GMPR family. As to quaternary structure, homotetramer. The cofactor is K(+).

The catalysed reaction is IMP + NAD(+) + H2O = XMP + NADH + H(+). It participates in purine metabolism; XMP biosynthesis via de novo pathway; XMP from IMP: step 1/1. Mycophenolic acid (MPA) is a non-competitive inhibitor that prevents formation of the closed enzyme conformation by binding to the same site as the amobile flap. In contrast, mizoribine monophosphate (MZP) is a competitive inhibitor that induces the closed conformation. MPA is a potent inhibitor of mammalian IMPDHs but a poor inhibitor of the bacterial enzymes. MZP is a more potent inhibitor of bacterial IMPDH. Functionally, catalyzes the conversion of inosine 5'-phosphate (IMP) to xanthosine 5'-phosphate (XMP), the first committed and rate-limiting step in the de novo synthesis of guanine nucleotides, and therefore plays an important role in the regulation of cell growth. The chain is Inosine-5'-monophosphate dehydrogenase from Staphylococcus aureus (strain MW2).